We begin with the raw amino-acid sequence, 125 residues long: Small ribosomal subunit protein eS6 (125 aa).

Belongs to the eukaryotic ribosomal protein eS6 family.

The chain is Small ribosomal subunit protein eS6 from Thermococcus onnurineus (strain NA1).